Consider the following 483-residue polypeptide: 23S rRNA (uracil(1939)-C(5))-methyltransferase RlmD (483 aa).

Residues Met1 to Arg11 show a composition bias toward basic residues. The interval Met1 to Gly36 is disordered. The region spanning Glu29–Glu90 is the TRAM domain. The [4Fe-4S] cluster site is built by Cys103, Cys109, Cys112, and Cys189. 6 residues coordinate S-adenosyl-L-methionine: Gln298, Phe332, Asn337, Glu353, Asp379, and Asp401. Cys427 serves as the catalytic Nucleophile.

The protein belongs to the class I-like SAM-binding methyltransferase superfamily. RNA M5U methyltransferase family. RlmD subfamily.

The catalysed reaction is uridine(1939) in 23S rRNA + S-adenosyl-L-methionine = 5-methyluridine(1939) in 23S rRNA + S-adenosyl-L-homocysteine + H(+). Its function is as follows. Catalyzes the formation of 5-methyl-uridine at position 1939 (m5U1939) in 23S rRNA. This chain is 23S rRNA (uracil(1939)-C(5))-methyltransferase RlmD, found in Halomonas elongata (strain ATCC 33173 / DSM 2581 / NBRC 15536 / NCIMB 2198 / 1H9).